An 86-amino-acid polypeptide reads, in one-letter code: Large ribosomal subunit protein uL24c (86 aa).

The protein belongs to the universal ribosomal protein uL24 family. As to quaternary structure, part of the 50S ribosomal subunit.

The protein localises to the plastid. It localises to the chloroplast. In terms of biological role, one of two assembly initiator proteins, it binds directly to the 5'-end of the 23S rRNA, where it nucleates assembly of the 50S subunit. The sequence is that of Large ribosomal subunit protein uL24c (rpl24) from Heterosigma akashiwo (strain NIES-293 / 8280G21-1).